Here is a 100-residue protein sequence, read N- to C-terminus: Large ribosomal subunit protein bL27 (100 aa).

Residues 1-13 (MNKLYWLTDLQLF) constitute a propeptide that is removed on maturation. A disordered region spans residues 17–39 (KGVGSSKNGRDSNPKYLGAKLGD).

Belongs to the bacterial ribosomal protein bL27 family. The N-terminus is cleaved by ribosomal processing cysteine protease Prp.

This is Large ribosomal subunit protein bL27 from Ureaplasma parvum serovar 3 (strain ATCC 700970).